The primary structure comprises 474 residues: Glutathione synthetase (474 aa).

Position 2 is an N-acetylalanine (Ala2). Position 125 (Arg125) interacts with substrate. Glu144 provides a ligand contact to ATP. 2 residues coordinate Mg(2+): Glu144 and Asn146. Residues Ile148–Ser151, Glu214–Asn216, Gln220, and Arg267–Tyr270 each bind substrate. Residues Lys305, Lys364–Asn373, Tyr375, and Met398–Thr401 each bind ATP. Glu368 serves as a coordination point for Mg(2+). At Ser415 the chain carries Phosphoserine. Glu425 contacts ATP. A substrate-binding site is contributed by Arg450. 2 residues coordinate ATP: Lys452 and Asp458. A substrate-binding site is contributed by Val461 to Ala462.

Belongs to the eukaryotic GSH synthase family. Homodimer. Requires Mg(2+) as cofactor.

The catalysed reaction is gamma-L-glutamyl-L-cysteine + glycine + ATP = glutathione + ADP + phosphate + H(+). It participates in sulfur metabolism; glutathione biosynthesis; glutathione from L-cysteine and L-glutamate: step 2/2. In terms of biological role, catalyzes the production of glutathione from gamma-glutamylcysteine and glycine in an ATP-dependent manner. Glutathione (gamma-glutamylcysteinylglycine, GSH) is the most abundant intracellular thiol in living aerobic cells and is required for numerous processes including the protection of cells against oxidative damage, amino acid transport, the detoxification of foreign compounds, the maintenance of protein sulfhydryl groups in a reduced state and acts as a cofactor for a number of enzymes. The chain is Glutathione synthetase (GSS) from Macaca fascicularis (Crab-eating macaque).